A 27-amino-acid polypeptide reads, in one-letter code: Protein YqiM (27 aa).

The protein is Protein YqiM of Escherichia coli (strain K12).